The sequence spans 645 residues: UPF0313 protein CLK_3381 (645 aa).

In terms of domain architecture, Radical SAM core spans 295 to 566 (AIKEVKFSIT…RMQRALLQFS (272 aa)). [4Fe-4S] cluster is bound by residues Cys309, Cys313, and Cys316. A disordered region spans residues 598-645 (NKPYKKSHKKNNVKNNNNHYNKNNNYNKNKDVSKKNKKNSLSKHKKRK). Residues 600–609 (PYKKSHKKNN) show a composition bias toward basic residues. A compositionally biased stretch (low complexity) spans 610–624 (VKNNNNHYNKNNNYN). Over residues 632–645 (KNKKNSLSKHKKRK) the composition is skewed to basic residues.

Belongs to the UPF0313 family. It depends on [4Fe-4S] cluster as a cofactor.

The protein is UPF0313 protein CLK_3381 of Clostridium botulinum (strain Loch Maree / Type A3).